We begin with the raw amino-acid sequence, 563 residues long: Putative cysteine ligase BshC (563 aa).

A coiled-coil region spans residues 493-518 (KEKTYRAGRRKHDELLQQLDKAELNL).

Belongs to the BshC family.

This chain is Putative cysteine ligase BshC, found in Chlorobaculum tepidum (strain ATCC 49652 / DSM 12025 / NBRC 103806 / TLS) (Chlorobium tepidum).